The following is a 562-amino-acid chain: Probable malate:quinone oxidoreductase (562 aa).

The interval 530–562 (EVPDKSATPTDPTIAPKHQHSTTHNANSEMQAL) is disordered. Residues 551 to 562 (TTHNANSEMQAL) are compositionally biased toward polar residues.

The protein belongs to the MQO family. The cofactor is FAD.

The enzyme catalyses (S)-malate + a quinone = a quinol + oxaloacetate. The protein operates within carbohydrate metabolism; tricarboxylic acid cycle; oxaloacetate from (S)-malate (quinone route): step 1/1. The protein is Probable malate:quinone oxidoreductase of Xylella fastidiosa (strain M12).